Consider the following 93-residue polypeptide: Phosphoribosyl-ATP pyrophosphatase (93 aa).

It belongs to the PRA-PH family.

The protein localises to the cytoplasm. The enzyme catalyses 1-(5-phospho-beta-D-ribosyl)-ATP + H2O = 1-(5-phospho-beta-D-ribosyl)-5'-AMP + diphosphate + H(+). It functions in the pathway amino-acid biosynthesis; L-histidine biosynthesis; L-histidine from 5-phospho-alpha-D-ribose 1-diphosphate: step 2/9. In Mycolicibacterium vanbaalenii (strain DSM 7251 / JCM 13017 / BCRC 16820 / KCTC 9966 / NRRL B-24157 / PYR-1) (Mycobacterium vanbaalenii), this protein is Phosphoribosyl-ATP pyrophosphatase.